A 1495-amino-acid polypeptide reads, in one-letter code: Pregnancy zone protein (1495 aa).

An N-terminal signal peptide occupies residues 1–24 (MRRNQLPTPAFLLLFLLLPRDATT). A disulfide bridge links Cys48 with Cys86. Asn55 and Asn157 each carry an N-linked (GlcNAc...) asparagine glycan. Intrachain disulfides connect Cys249–Cys298 and Cys267–Cys286. N-linked (GlcNAc...) asparagine glycosylation is found at Asn382, Asn405, and Asn412. Cys469 and Cys562 are oxidised to a cystine. Residue Asn568 is glycosylated (N-linked (GlcNAc...) asparagine). Cystine bridges form between Cys594–Cys783, Cys642–Cys689, Cys833–Cys861, Cys859–Cys895, Cys933–Cys1339, and Cys1092–Cys1140. The tract at residues 686-744 (PRFCQEFQHYPAMGGVAPQALAVAASGPGSSFRAMGVPMMGLDYSDEINQVVEVRETVR) is bait region. Asn881 and Asn942 each carry an N-linked (GlcNAc...) asparagine glycan. The isoglutamyl cysteine thioester (Cys-Gln) cross-link spans 984 to 987 (CGEQ). Asn1003 is a glycosylation site (N-linked (GlcNAc...) asparagine). Asn1385 and Asn1443 each carry an N-linked (GlcNAc...) asparagine glycan.

It belongs to the protease inhibitor I39 (alpha-2-macroglobulin) family. In terms of tissue distribution, highest expression in liver, medium expression in ovary, heart and stomach. Low expression in lung, kidney and uterus. Protein found in plasma.

It is found in the secreted. In terms of biological role, is able to inhibit all four classes of proteinases by a unique 'trapping' mechanism. This protein has a peptide stretch, called the 'bait region' which contains specific cleavage sites for different proteinases. When a proteinase cleaves the bait region, a conformational change is induced in the protein which traps the proteinase. The entrapped enzyme remains active against low molecular weight substrates (activity against high molecular weight substrates is greatly reduced). Following cleavage in the bait region, a thioester bond is hydrolyzed and mediates the covalent binding of the protein to the proteinase. This chain is Pregnancy zone protein (Pzp), found in Mus musculus (Mouse).